The primary structure comprises 266 residues: Integral membrane protein 2B (266 aa).

Topologically, residues 1-54 (MVKVTFNSALAQKEAKKDEPKSSEEALIVPPDAVAVDCKDPGDVVPVGQRRAWC) are cytoplasmic. The helical; Signal-anchor for type II membrane protein transmembrane segment at 55–75 (WCMCFGLAFMLAGVILGGAYL) threads the bilayer. Topologically, residues 76-266 (YKYFALQPDD…KFAVETLICS (191 aa)) are lumenal. The segment at 102-134 (EPSADAPAARYQTIEENIKIFEEDAVEFISVPV) is necessary for interaction with APP and inhibitor effects on APP processing. The 95-residue stretch at 137-231 (FADSDPANIV…LCHDKETYKL (95 aa)) folds into the BRICHOS domain. Disulfide bonds link Cys-164–Cys-223 and Cys-248–Cys-265. N-linked (GlcNAc...) asparagine glycosylation is present at Asn-170.

Belongs to the ITM2 family. In terms of assembly, homodimer; disulfide-linked. Interacts with SPPL2A and SPPL2B. Interacts with APP. Mature BRI2 (mBRI2) interacts with the APP amyloid-beta A4 protein; the interaction occurs at the cell surface and in the endocytic compartments and enable alpha- and beta-secretase-induced APP cleavage inhibition. Mature BRI2 (mBRI2) interacts with the APP C99; the interaction occurs in the endocytic compartments and enable gamma-secretase-induced C99 cleavage inhibition. May form heterodimers with Bri23 peptide and APP amyloid-beta protein 40. Interacts with ADAM7 in sperm; the interaction increases following capacitation. In terms of processing, the ectodomain C-terminal part of the imBRI2 is processed by furin producing a secreted Bri23 peptide and a mature BRI2, membrane form (mBRI2). The remaining part of the ectodomain of mBRI2 containing the BRICHOS domain is cleaved by ADAM10 and is secreted (BRI2C, soluble form). The membrane-bound N-terminal fragment (BRI2C, membrane form) is further proteolytically processed by SPPL2A and SPPL2B through regulated intramembrane proteolysis producing a secreted C-peptide and a BRI2 intracellular domain (BRI2 ICD) released in the cytosol. Shedding by ADAM10 facilitates intramembrane cleavage but is not absolutely required for BRI2 ICD generation. Glycosylation at Asn-170 is important for cell surface localization, but doesn't affect furin- and ADAM10-induced proteolytic processing. As to expression, expressed in the brain, testis, testicular sperm, epididymis and mature epididymal sperm (at protein level).

The protein resides in the golgi apparatus membrane. It is found in the cell membrane. Its subcellular location is the endosome membrane. It localises to the secreted. In terms of biological role, plays a regulatory role in the processing of the amyloid-beta A4 precursor protein (APP) and acts as an inhibitor of the amyloid-beta peptide aggregation and fibrils deposition. Plays a role in the induction of neurite outgrowth. Functions as a protease inhibitor by blocking access of secretases to APP cleavage sites. Mature BRI2 (mBRI2) functions as a modulator of the amyloid-beta A4 precursor protein (APP) processing leading to a strong reduction in the secretion of secretase-processed amyloid-beta protein 40 and amyloid-beta protein 42. Functionally, bri23 peptide prevents aggregation of APP amyloid-beta protein 42 into toxic oligomers. This is Integral membrane protein 2B (Itm2b) from Mus musculus (Mouse).